Consider the following 339-residue polypeptide: tRNA-specific 2-thiouridylase MnmA (339 aa).

ATP-binding positions include 8 to 15 (AMSGGVDS) and Met-34. The Nucleophile role is filled by Cys-94. Cys-94 and Cys-188 form a disulfide bridge. Gly-118 contributes to the ATP binding site. Residues 136 to 138 (KDQ) form an interaction with tRNA region. Cys-188 (cysteine persulfide intermediate) is an active-site residue. Residues 290–291 (RY) are interaction with tRNA.

This sequence belongs to the MnmA/TRMU family.

Its subcellular location is the cytoplasm. It carries out the reaction S-sulfanyl-L-cysteinyl-[protein] + uridine(34) in tRNA + AH2 + ATP = 2-thiouridine(34) in tRNA + L-cysteinyl-[protein] + A + AMP + diphosphate + H(+). Functionally, catalyzes the 2-thiolation of uridine at the wobble position (U34) of tRNA, leading to the formation of s(2)U34. This Nitratiruptor sp. (strain SB155-2) protein is tRNA-specific 2-thiouridylase MnmA.